The sequence spans 272 residues: Indole-3-glycerol phosphate synthase (272 aa).

This sequence belongs to the TrpC family.

It carries out the reaction 1-(2-carboxyphenylamino)-1-deoxy-D-ribulose 5-phosphate + H(+) = (1S,2R)-1-C-(indol-3-yl)glycerol 3-phosphate + CO2 + H2O. Its pathway is amino-acid biosynthesis; L-tryptophan biosynthesis; L-tryptophan from chorismate: step 4/5. This chain is Indole-3-glycerol phosphate synthase, found in Mycolicibacterium paratuberculosis (strain ATCC BAA-968 / K-10) (Mycobacterium paratuberculosis).